We begin with the raw amino-acid sequence, 546 residues long: MGCVKSKEDKGPTQKYRPDPTNPTPGSHMGLYGPDPTQMGQSPALKGPTNNYNSRSSGLTPFGGSSSVITPFGGASSSFSTVAVNNPFPGVVTGGVTFFVALYDYEARTSDDLSFSKGDRFQIINNTEGDWWEARSINTGQKGYIPSNYVAPADSIQAEEWYFGKMGRKDAERLLLLPGNQRGTFLVRESETTKGAYSLSIRDWDEMKGDNVKHYKIRKLDSGGYYITTRAQFDTLQKLVKHYTEHADGLCYRLTTVCPTVKPQTQGLAKDAWEIPRESLRLELKLGQGCFGEVWMGTWNGTTKVAIKTLKPGTMSPEAFLQEAQIMKKLRHDKLVPLYAVVSEEPIYIVTEYMGKGSLLDFLKEGEGKYLKLPQLVDMAAQIADGMAFIERMNYIHRDLRAANILVGDNLVCKIADFGLARLIEDNEYTARQGAKFPIKWTAPEAALYGRFTIKSDVWSFGILLTELVTKGRVPYPGMVNREVLEQVERGYRMPCPQGCPESLHEMMRLCWKKEPDERPTFEYIQSFLEDYFTATEPQYQPGDNL.

Over residues 1-18 (MGCVKSKEDKGPTQKYRP) the composition is skewed to basic and acidic residues. The segment at 1–58 (MGCVKSKEDKGPTQKYRPDPTNPTPGSHMGLYGPDPTQMGQSPALKGPTNNYNSRSSG) is disordered. The N-myristoyl glycine moiety is linked to residue glycine 2. Cysteine 3 carries S-palmitoyl cysteine; in membrane form lipidation. A compositionally biased stretch (polar residues) spans 48 to 58 (PTNNYNSRSSG). The 62-residue stretch at 94 to 155 (GGVTFFVALY…PSNYVAPADS (62 aa)) folds into the SH3 domain. Residues 161–258 (WYFGKMGRKD…GLCYRLTTVC (98 aa)) form the SH2 domain. One can recognise a Protein kinase domain in the interval 280–533 (LRLELKLGQG…YIQSFLEDYF (254 aa)). Residues 286-294 (LGQGCFGEV) and lysine 308 each bind ATP. Aspartate 399 serves as the catalytic Proton acceptor. Phosphotyrosine; by autocatalysis is present on tyrosine 429. Residue tyrosine 540 is modified to Phosphotyrosine; by CSK.

This sequence belongs to the protein kinase superfamily. Tyr protein kinase family. SRC subfamily. Post-translationally, autophosphorylation at Tyr-429 maintains enzyme activity. In terms of processing, palmitoylation at Cys-3 promotes membrane localization. In terms of tissue distribution, widely expressed.

It localises to the cell membrane. The protein localises to the cytoplasm. It is found in the cytoskeleton. Its subcellular location is the microtubule organizing center. The protein resides in the centrosome. It localises to the cytosol. The protein localises to the cell junction. The enzyme catalyses L-tyrosyl-[protein] + ATP = O-phospho-L-tyrosyl-[protein] + ADP + H(+). Functionally, non-receptor protein tyrosine kinase that is involved in the regulation of cell growth and survival, apoptosis, cell-cell adhesion, cytoskeleton remodeling, differentiation, G2/M progression and cytokinesis. Required for convergent extension cell movements during gastrulation, acting with fyna via rhoa. May be required for epiboly to occur, possibly through its effects in calcium signaling. During embryonic development, phosphorylates ptk2.1/fak. The protein is Tyrosine-protein kinase yes (yes1) of Danio rerio (Zebrafish).